The primary structure comprises 608 residues: Protein SHQ1 homolog (608 aa).

Disordered stretches follow at residues 487-531 (DAGS…SFYS) and 543-608 (IVYE…ASTT). The segment covering 489–498 (GSQGSSPQQQ) has biased composition (low complexity). 2 stretches are compositionally biased toward acidic residues: residues 502–524 (DDLDLDNDTSGQEDETTTDDESV) and 543–579 (IVYEDDEEDEDDDEDGDDDEDGDGDEDEDEDEDEDDS). The span at 588–608 (EAEGNSVIEQCSNSETAASTT) shows a compositional bias: polar residues.

This sequence belongs to the SHQ1 family.

Required for the quantitative accumulation of H/ACA ribonucleoproteins (RNPs). This is Protein SHQ1 homolog from Drosophila melanogaster (Fruit fly).